Consider the following 271-residue polypeptide: Intercellular adhesion molecule 4 (271 aa).

The first 22 residues, 1-22 (MGSLFPLSLLFFLAAAYPGVGS), serve as a signal peptide directing secretion. Topologically, residues 23–240 (ALGRRTKRAQ…MLAWSPAPTA (218 aa)) are extracellular. Ig-like C2-type domains lie at 62-124 (GKSV…TRWA) and 146-217 (GRKY…LNLD). N-linked (GlcNAc...) asparagine glycans are attached at residues N68, N78, N190, and N223. Disulfide bonds link C69–C113, C69–C117, C73–C117, and C153–C210. The chain crosses the membrane as a helical span at residues 241–261 (LASGSIAALVGILLTVGAAYL). At 262-271 (CKCLAMKSQA) the chain is on the cytoplasmic side.

It belongs to the immunoglobulin superfamily. ICAM family. In terms of processing, N- and O-glycosylated. Erythrocytes.

The protein resides in the cell membrane. It localises to the secreted. In terms of biological role, ICAM proteins are ligands for the leukocyte adhesion protein LFA-1 (integrin alpha-L/beta-2). ICAM4 is also a ligand for alpha-4/beta-1 and alpha-V integrins. The chain is Intercellular adhesion molecule 4 (ICAM4) from Homo sapiens (Human).